A 403-amino-acid chain; its full sequence is Ubiquitin-like modifier-activating enzyme 5 (403 aa).

ATP contacts are provided by G81, D102, K125, N148, and N182. Residues C224 and C227 each coordinate Zn(2+). C248 functions as the Glycyl thioester intermediate in the catalytic mechanism. Zn(2+) is bound by residues C301 and C306. Residues 306–315 show a composition bias toward basic and acidic residues; sequence CRKQQEEYKK. A disordered region spans residues 306 to 337; it reads CRKQQEEYKKRAPAQPTQETAPQEEEEVVHED. The UFM1-interacting sequence (UIS) motif lies at 333–345; that stretch reads VVHEDNEWGIELV. Positions 346–376 are linker; that stretch reads SEVSEEELKNSSGPVPTLPEGITVAYTVPKK. S357 and S392 each carry phosphoserine. Residues 388–403 carry the UFC1-binding sequence (UFC) motif; that stretch reads DSGESLEDLMARMKKM.

Belongs to the ubiquitin-activating E1 family. UBA5 subfamily. In terms of assembly, homodimer; homodimerization is required for UFM1 activation. Interacts (via UIS motif) with UFM1; binds UFM1 via a trans-binding mechanism in which UFM1 interacts with distinct sites in both subunits of the UBA5 homodimer. Interacts (via C-terminus) with UFC1. Interacts (via UIS motif) with GABARAPL2 and, with lower affinity, with GABARAP and GABARAPL1.

The protein localises to the cytoplasm. It is found in the nucleus. The protein resides in the endoplasmic reticulum membrane. Its subcellular location is the golgi apparatus. Functionally, E1-like enzyme which specifically catalyzes the first step in ufmylation. Activates UFM1 by first adenylating its C-terminal glycine residue with ATP, and thereafter linking this residue to the side chain of a cysteine residue in E1, yielding a UFM1-E1 thioester and free AMP. Activates UFM1 via a trans-binding mechanism, in which UFM1 interacts with distinct sites in both subunits of the UBA5 homodimer. Trans-binding also promotes stabilization of the UBA5 homodimer, and enhances ATP-binding. Transfer of UFM1 from UBA5 to the E2-like enzyme UFC1 also takes place using a trans mechanism. Ufmylation plays a key role in various processes, such as ribosome recycling, response to DNA damage, interferon response or reticulophagy (also called ER-phagy). Ufmylation is essential for erythroid differentiation of both megakaryocytes and erythrocytes. The polypeptide is Ubiquitin-like modifier-activating enzyme 5 (Rattus norvegicus (Rat)).